A 334-amino-acid chain; its full sequence is Ketol-acid reductoisomerase (NADP(+)) (334 aa).

The 181-residue stretch at 1 to 181 folds into the KARI N-terminal Rossmann domain; the sequence is MNRYYDKNAD…GGGRTGILET (181 aa). NADP(+) is bound by residues 24–27, Arg47, Ser50, Ser52, and 82–85; these read YGSQ and DEFQ. His107 is a catalytic residue. Gly133 lines the NADP(+) pocket. The 142-residue stretch at 182–323 folds into the KARI C-terminal knotted domain; sequence SFKDETETDL…ESLRSMMPWI (142 aa). Mg(2+) contacts are provided by Asp190, Glu194, Glu226, and Glu230. Residue Ser251 participates in substrate binding.

Belongs to the ketol-acid reductoisomerase family. Requires Mg(2+) as cofactor.

It catalyses the reaction (2R)-2,3-dihydroxy-3-methylbutanoate + NADP(+) = (2S)-2-acetolactate + NADPH + H(+). The enzyme catalyses (2R,3R)-2,3-dihydroxy-3-methylpentanoate + NADP(+) = (S)-2-ethyl-2-hydroxy-3-oxobutanoate + NADPH + H(+). Its pathway is amino-acid biosynthesis; L-isoleucine biosynthesis; L-isoleucine from 2-oxobutanoate: step 2/4. It participates in amino-acid biosynthesis; L-valine biosynthesis; L-valine from pyruvate: step 2/4. Involved in the biosynthesis of branched-chain amino acids (BCAA). Catalyzes an alkyl-migration followed by a ketol-acid reduction of (S)-2-acetolactate (S2AL) to yield (R)-2,3-dihydroxy-isovalerate. In the isomerase reaction, S2AL is rearranged via a Mg-dependent methyl migration to produce 3-hydroxy-3-methyl-2-ketobutyrate (HMKB). In the reductase reaction, this 2-ketoacid undergoes a metal-dependent reduction by NADPH to yield (R)-2,3-dihydroxy-isovalerate. The sequence is that of Ketol-acid reductoisomerase (NADP(+)) from Ruthia magnifica subsp. Calyptogena magnifica.